Here is a 521-residue protein sequence, read N- to C-terminus: Bifunctional purine biosynthesis protein PurH (521 aa).

One can recognise an MGS-like domain in the interval 1–145 (MIKQALISVS…KNHRDVTVVV (145 aa)).

It belongs to the PurH family.

It catalyses the reaction (6R)-10-formyltetrahydrofolate + 5-amino-1-(5-phospho-beta-D-ribosyl)imidazole-4-carboxamide = 5-formamido-1-(5-phospho-D-ribosyl)imidazole-4-carboxamide + (6S)-5,6,7,8-tetrahydrofolate. The catalysed reaction is IMP + H2O = 5-formamido-1-(5-phospho-D-ribosyl)imidazole-4-carboxamide. The protein operates within purine metabolism; IMP biosynthesis via de novo pathway; 5-formamido-1-(5-phospho-D-ribosyl)imidazole-4-carboxamide from 5-amino-1-(5-phospho-D-ribosyl)imidazole-4-carboxamide (10-formyl THF route): step 1/1. It functions in the pathway purine metabolism; IMP biosynthesis via de novo pathway; IMP from 5-formamido-1-(5-phospho-D-ribosyl)imidazole-4-carboxamide: step 1/1. This is Bifunctional purine biosynthesis protein PurH from Burkholderia pseudomallei (strain 1106a).